We begin with the raw amino-acid sequence, 210 residues long: Somatotropin (210 aa).

Positions 1–23 (MARVLVLLSVVLVSLLVNQGRAS) are cleaved as a signal peptide. Histidine 38 contributes to the Zn(2+) binding site. Cysteines 71 and 183 form a disulfide. Residue glutamate 192 participates in Zn(2+) binding. Cysteine 200 and cysteine 208 are joined by a disulfide.

This sequence belongs to the somatotropin/prolactin family.

The protein resides in the secreted. Functionally, growth hormone plays an important role in growth control. This Cyprinus carpio (Common carp) protein is Somatotropin (gh).